A 376-amino-acid polypeptide reads, in one-letter code: Lipid-A-disaccharide synthase (376 aa).

The protein belongs to the LpxB family.

It catalyses the reaction a lipid X + a UDP-2-N,3-O-bis[(3R)-3-hydroxyacyl]-alpha-D-glucosamine = a lipid A disaccharide + UDP + H(+). The protein operates within bacterial outer membrane biogenesis; LPS lipid A biosynthesis. Its function is as follows. Condensation of UDP-2,3-diacylglucosamine and 2,3-diacylglucosamine-1-phosphate to form lipid A disaccharide, a precursor of lipid A, a phosphorylated glycolipid that anchors the lipopolysaccharide to the outer membrane of the cell. The chain is Lipid-A-disaccharide synthase from Coxiella burnetii (strain RSA 331 / Henzerling II).